The primary structure comprises 84 residues: Small ribosomal subunit protein bS16 (84 aa).

This sequence belongs to the bacterial ribosomal protein bS16 family.

The protein is Small ribosomal subunit protein bS16 of Cupriavidus pinatubonensis (strain JMP 134 / LMG 1197) (Cupriavidus necator (strain JMP 134)).